The following is a 225-amino-acid chain: Cyanamide hydratase DDI2 (225 aa).

The region spanning 52–162 (VLNHSLRVFQ…LQIATTLDNV (111 aa)) is the HD domain.

The protein belongs to the cyanamide dehydrase family. As to quaternary structure, homohexamer. It depends on Zn(2+) as a cofactor.

The catalysed reaction is urea = cyanamide + H2O. In terms of biological role, cyanamide hydratase involved in the detoxification and/or utilization of cyanamide, a toxic nitrile compound distributed widely in the environment. The chain is Cyanamide hydratase DDI2 from Saccharomyces cerevisiae (strain ATCC 204508 / S288c) (Baker's yeast).